Reading from the N-terminus, the 953-residue chain is E3 ubiquitin-protein ligase ZNF598 (953 aa).

The span at 25-39 (KPSKSTRIKPTKPHH) shows a compositional bias: basic residues. The segment at 25 to 47 (KPSKSTRIKPTKPHHTPSNSMES) is disordered. The RING-type zinc finger occupies 57 to 97 (CVLCCQDIDLFAVGKCDHPVCYRCSTKMRVLCEQKYCAVCR). The segment at 215–238 (PLCKFCDDRYLDNDELLKHLRRDH) adopts a C2H2-type zinc-finger fold. Disordered regions lie at residues 299-779 (SKNR…EDSS) and 884-911 (EKQQQGSKPKKSKKKAWQTGTSSSSSLD). Residues 371 to 380 (AAAMRASMAS) show a composition bias toward low complexity. Residues 381–409 (HQEERSHAQERSMLKPRREEKLEPDETRN) are compositionally biased toward basic and acidic residues. Polar residues-rich tracts occupy residues 410 to 431 (NRSTARPTNDTQARSMKSNGSL) and 467 to 483 (LSGSVVSSPMTPAYTNQ). Ser489 carries the phosphoserine modification. 2 stretches are compositionally biased toward low complexity: residues 508-518 (QSSAASAWSQA) and 536-553 (MTPMSSSSILSSTDPLPS). Polar residues-rich tracts occupy residues 555 to 564 (SVPQPLTASS) and 641 to 650 (LGSPSHTPET). Basic and acidic residues predominate over residues 655-666 (AHKENVPEKKPP). Polar residues predominate over residues 695–711 (SCTSFPENITSSKQPVT). Residues 747–765 (LPPPPPPGLGPAVSKPPPG) are compositionally biased toward pro residues. The span at 770-779 (PLNSNVEDSS) shows a compositional bias: polar residues.

Belongs to the ZNF598/HEL2 family.

Its subcellular location is the cytoplasm. It is found in the cytosol. It carries out the reaction S-ubiquitinyl-[E2 ubiquitin-conjugating enzyme]-L-cysteine + [acceptor protein]-L-lysine = [E2 ubiquitin-conjugating enzyme]-L-cysteine + N(6)-ubiquitinyl-[acceptor protein]-L-lysine.. The protein operates within protein modification; protein ubiquitination. Functionally, E3 ubiquitin-protein ligase that plays a key role in the ribosome quality control (RQC), a pathway that takes place when a ribosome has stalled during translation, leading to degradation of nascent peptide chains. ZNF598 is activated when ribosomes are stalled within an mRNA following translation of prematurely polyadenylated mRNAs. Acts as a ribosome collision sensor: specifically recognizes and binds collided di-ribosome, which arises when a trailing ribosome encounters a slower leading ribosome, leading to terminally arrest translation. Following binding to colliding ribosomes, mediates monoubiquitination of 40S ribosomal proteins RPS10/eS10 and RPS3/uS3, and 'Lys-63'-linked polyubiquitination of RPS20/uS10. Polyubiquitination of RPS20/uS10 promotes recruitment of the RQT (ribosome quality control trigger) complex, which drives the disassembly of stalled ribosomes, followed by degradation of nascent peptides. The sequence is that of E3 ubiquitin-protein ligase ZNF598 from Danio rerio (Zebrafish).